The chain runs to 138 residues: Large ribosomal subunit protein uL16m (138 aa).

This sequence belongs to the universal ribosomal protein uL16 family.

It localises to the mitochondrion. The protein is Large ribosomal subunit protein uL16m (RPL16) of Chondrus crispus (Carrageen Irish moss).